A 632-amino-acid polypeptide reads, in one-letter code: 1-deoxy-D-xylulose-5-phosphate synthase (632 aa).

Thiamine diphosphate contacts are provided by residues His-73 and 114 to 116; that span reads SHA. Mg(2+) is bound at residue Asp-146. Thiamine diphosphate-binding positions include 147 to 148, Asn-176, Tyr-287, and Glu-368; that span reads GA. Asn-176 is a Mg(2+) binding site.

It belongs to the transketolase family. DXPS subfamily. In terms of assembly, homodimer. Mg(2+) serves as cofactor. Requires thiamine diphosphate as cofactor.

It carries out the reaction D-glyceraldehyde 3-phosphate + pyruvate + H(+) = 1-deoxy-D-xylulose 5-phosphate + CO2. It functions in the pathway metabolic intermediate biosynthesis; 1-deoxy-D-xylulose 5-phosphate biosynthesis; 1-deoxy-D-xylulose 5-phosphate from D-glyceraldehyde 3-phosphate and pyruvate: step 1/1. Its function is as follows. Catalyzes the acyloin condensation reaction between C atoms 2 and 3 of pyruvate and glyceraldehyde 3-phosphate to yield 1-deoxy-D-xylulose-5-phosphate (DXP). This chain is 1-deoxy-D-xylulose-5-phosphate synthase, found in Corynebacterium glutamicum (strain R).